The following is a 284-amino-acid chain: 2-dehydro-3-deoxyphosphooctonate aldolase (284 aa).

This sequence belongs to the KdsA family.

Its subcellular location is the cytoplasm. It catalyses the reaction D-arabinose 5-phosphate + phosphoenolpyruvate + H2O = 3-deoxy-alpha-D-manno-2-octulosonate-8-phosphate + phosphate. The protein operates within carbohydrate biosynthesis; 3-deoxy-D-manno-octulosonate biosynthesis; 3-deoxy-D-manno-octulosonate from D-ribulose 5-phosphate: step 2/3. It functions in the pathway bacterial outer membrane biogenesis; lipopolysaccharide biosynthesis. This Histophilus somni (strain 129Pt) (Haemophilus somnus) protein is 2-dehydro-3-deoxyphosphooctonate aldolase.